The sequence spans 101 residues: Integration host factor subunit beta (101 aa).

A disordered region spans residues 58–101 (ARAGRNPRTGAHVPVDQKSVPFFKTGKEMRERLNRDTGAPDSGA). Residues 82–92 (TGKEMRERLNR) show a composition bias toward basic and acidic residues.

This sequence belongs to the bacterial histone-like protein family. In terms of assembly, heterodimer of an alpha and a beta chain.

In terms of biological role, this protein is one of the two subunits of integration host factor, a specific DNA-binding protein that functions in genetic recombination as well as in transcriptional and translational control. This Rhodopseudomonas palustris (strain BisB18) protein is Integration host factor subunit beta.